The sequence spans 319 residues: Acetyl-coenzyme A carboxylase carboxyl transferase subunit alpha (319 aa).

The 262-residue stretch at 35-296 (NIDEEVHRLR…KAQLLEDLAD (262 aa)) folds into the CoA carboxyltransferase C-terminal domain.

Belongs to the AccA family. In terms of assembly, acetyl-CoA carboxylase is a heterohexamer composed of biotin carboxyl carrier protein (AccB), biotin carboxylase (AccC) and two subunits each of ACCase subunit alpha (AccA) and ACCase subunit beta (AccD).

It localises to the cytoplasm. It catalyses the reaction N(6)-carboxybiotinyl-L-lysyl-[protein] + acetyl-CoA = N(6)-biotinyl-L-lysyl-[protein] + malonyl-CoA. It participates in lipid metabolism; malonyl-CoA biosynthesis; malonyl-CoA from acetyl-CoA: step 1/1. Functionally, component of the acetyl coenzyme A carboxylase (ACC) complex. First, biotin carboxylase catalyzes the carboxylation of biotin on its carrier protein (BCCP) and then the CO(2) group is transferred by the carboxyltransferase to acetyl-CoA to form malonyl-CoA. The polypeptide is Acetyl-coenzyme A carboxylase carboxyl transferase subunit alpha (Salmonella arizonae (strain ATCC BAA-731 / CDC346-86 / RSK2980)).